A 124-amino-acid chain; its full sequence is Acidic phospholipase A2 A (124 aa).

7 disulfide bridges follow: Cys26/Cys116, Cys28/Cys44, Cys43/Cys95, Cys49/Cys124, Cys50/Cys88, Cys57/Cys81, and Cys75/Cys86. Ca(2+) is bound by residues Tyr27, Gly29, and Gly31. His47 is an active-site residue. Asp48 contributes to the Ca(2+) binding site. The active site involves Asp89.

Belongs to the phospholipase A2 family. Group II subfamily. D49 sub-subfamily. Ca(2+) is required as a cofactor. In terms of tissue distribution, expressed by the venom gland.

The protein localises to the secreted. It carries out the reaction a 1,2-diacyl-sn-glycero-3-phosphocholine + H2O = a 1-acyl-sn-glycero-3-phosphocholine + a fatty acid + H(+). Functionally, PLA2 catalyzes the calcium-dependent hydrolysis of the 2-acyl groups in 3-sn-phosphoglycerides. In Gloydius halys (Chinese water mocassin), this protein is Acidic phospholipase A2 A.